A 217-amino-acid polypeptide reads, in one-letter code: MLSLHKTLEMPSADTALPGRAAPIPTAQTHFVNGHALKGPYPEGLETAIVAMGCFWGVERVFWKVPGVYVTAAGYAAGITPNPTYEEVCTGRTGHTEVVLVVFDPKVVTYEALLKTFWENHDPTQGMRQGNDIGTQYRSGLYVTSDAQAAAAAESKAAYQQALSARGLGTITTEIAPAGPFYFAEDYHQQYLAKNPNGYCGIGGTGVVCPIGLGVEG.

Residue Cys54 is part of the active site.

The protein belongs to the MsrA Met sulfoxide reductase family.

It catalyses the reaction L-methionyl-[protein] + [thioredoxin]-disulfide + H2O = L-methionyl-(S)-S-oxide-[protein] + [thioredoxin]-dithiol. The catalysed reaction is [thioredoxin]-disulfide + L-methionine + H2O = L-methionine (S)-S-oxide + [thioredoxin]-dithiol. Has an important function as a repair enzyme for proteins that have been inactivated by oxidation. Catalyzes the reversible oxidation-reduction of methionine sulfoxide in proteins to methionine. This chain is Peptide methionine sulfoxide reductase MsrA 1 (msrA1), found in Caulobacter vibrioides (strain ATCC 19089 / CIP 103742 / CB 15) (Caulobacter crescentus).